The chain runs to 370 residues: GTPase Obg (370 aa).

An Obg domain is found at 1–159; it reads MKFIDEARIE…RMVRLELKVL (159 aa). A disordered region spans residues 127-147; it reads NLHFKSSTNRAPRQKTDGKPG. Positions 160-334 constitute an OBG-type G domain; the sequence is ADVGLLGMPN…LCYAVYDYLA (175 aa). GTP-binding positions include 166-173, 191-195, 213-216, 284-287, and 315-317; these read GMPNAGKS, FTTLA, DIPG, NKLD, and SAL. Residues Ser173 and Thr193 each coordinate Mg(2+).

Belongs to the TRAFAC class OBG-HflX-like GTPase superfamily. OBG GTPase family. In terms of assembly, monomer. Mg(2+) serves as cofactor.

It localises to the cytoplasm. Functionally, an essential GTPase which binds GTP, GDP and possibly (p)ppGpp with moderate affinity, with high nucleotide exchange rates and a fairly low GTP hydrolysis rate. Plays a role in control of the cell cycle, stress response, ribosome biogenesis and in those bacteria that undergo differentiation, in morphogenesis control. The protein is GTPase Obg of Paraburkholderia phymatum (strain DSM 17167 / CIP 108236 / LMG 21445 / STM815) (Burkholderia phymatum).